The sequence spans 173 residues: Putative C-type lectin protein FPV198 (173 aa).

One can recognise a C-type lectin domain in the interval 50 to 169; sequence GMSGWVQINN…CNKKHTGICF (120 aa).

This Vertebrata (FPV) protein is Putative C-type lectin protein FPV198.